Here is a 441-residue protein sequence, read N- to C-terminus: UPF0761 membrane protein Clim_1521 (441 aa).

Helical transmembrane passes span 54-74, 122-142, 161-181, 203-223, 233-253, and 266-286; these read IFLSAGSLAFQTLLSIVPFLA, TVPLIGGLLLFIIALSLISTI, AFTLYWTVLTLGPVLIGSSLG, LISFLPFVNSLLSFLLLYMLV, AFSGAVAAALLFELSKKWFVF, and GAISAVPLLFFWIYIGWLVVL.

This sequence belongs to the UPF0761 family.

It localises to the cell inner membrane. This Chlorobium limicola (strain DSM 245 / NBRC 103803 / 6330) protein is UPF0761 membrane protein Clim_1521.